Consider the following 250-residue polypeptide: Flavin-dependent thymidylate synthase (250 aa).

Residues 7 to 233 (LRVQLIAKTD…PSIFGDFDIA (227 aa)) enclose the ThyX domain. FAD is bound by residues Ser-71, 95–97 (RHR), and Gln-103. Residues 92-95 (ELIR), 103-107 (QLSQR), and Arg-172 each bind dUMP. The short motif at 95–105 (RHRHFSYSQLS) is the ThyX motif element. FAD-binding positions include 188–190 (NYR) and His-194. Arg-199 contacts dUMP. The active-site Involved in ionization of N3 of dUMP, leading to its activation is the Arg-199.

It belongs to the thymidylate synthase ThyX family. In terms of assembly, homotetramer. FAD is required as a cofactor.

It catalyses the reaction dUMP + (6R)-5,10-methylene-5,6,7,8-tetrahydrofolate + NADPH + H(+) = dTMP + (6S)-5,6,7,8-tetrahydrofolate + NADP(+). It functions in the pathway pyrimidine metabolism; dTTP biosynthesis. Catalyzes the reductive methylation of 2'-deoxyuridine-5'-monophosphate (dUMP) to 2'-deoxythymidine-5'-monophosphate (dTMP) while utilizing 5,10-methylenetetrahydrofolate (mTHF) as the methyl donor, and NADPH and FADH(2) as the reductant. The sequence is that of Flavin-dependent thymidylate synthase from Mycobacteroides abscessus (strain ATCC 19977 / DSM 44196 / CCUG 20993 / CIP 104536 / JCM 13569 / NCTC 13031 / TMC 1543 / L948) (Mycobacterium abscessus).